The primary structure comprises 274 residues: Thiamine kinase (274 aa).

Belongs to the thiamine kinase family.

It catalyses the reaction thiamine + ATP = thiamine phosphate + ADP + H(+). Its pathway is cofactor biosynthesis; thiamine diphosphate biosynthesis; thiamine phosphate from thiamine: step 1/1. Its function is as follows. Catalyzes the ATP-dependent phosphorylation of thiamine to thiamine phosphate. Is involved in thiamine salvage. This Shigella sonnei (strain Ss046) protein is Thiamine kinase.